The primary structure comprises 292 residues: Ribosomal protein L11 methyltransferase (292 aa).

The S-adenosyl-L-methionine site is built by Thr144, Gly165, Asp187, and Asn229.

Belongs to the methyltransferase superfamily. PrmA family.

The protein resides in the cytoplasm. It carries out the reaction L-lysyl-[protein] + 3 S-adenosyl-L-methionine = N(6),N(6),N(6)-trimethyl-L-lysyl-[protein] + 3 S-adenosyl-L-homocysteine + 3 H(+). Methylates ribosomal protein L11. This is Ribosomal protein L11 methyltransferase from Azotobacter vinelandii (strain DJ / ATCC BAA-1303).